The sequence spans 232 residues: 6-hydroxymethyl-7,8-dihydropterin pyrophosphokinase (232 aa).

The protein belongs to the archaeal 6-HMPDK family. Mg(2+) serves as cofactor.

The enzyme catalyses 6-hydroxymethyl-7,8-dihydropterin + ATP = (7,8-dihydropterin-6-yl)methyl diphosphate + AMP + H(+). Its pathway is cofactor biosynthesis; 5,6,7,8-tetrahydromethanopterin biosynthesis. In terms of biological role, catalyzes the transfer of diphosphate from ATP to 6-hydroxymethyl-7,8-dihydropterin (6-HMD), leading to 6-hydroxymethyl-7,8-dihydropterin diphosphate (6-HMDP). This Methanothermobacter thermautotrophicus (strain ATCC 29096 / DSM 1053 / JCM 10044 / NBRC 100330 / Delta H) (Methanobacterium thermoautotrophicum) protein is 6-hydroxymethyl-7,8-dihydropterin pyrophosphokinase.